A 385-amino-acid polypeptide reads, in one-letter code: Glucose-fructose oxidoreductase domain-containing protein 2 (385 aa).

Residues 1-25 (MKMLPGVGVFGTGSSARVLVPLLRA) form the signal peptide.

Belongs to the Gfo/Idh/MocA family.

The protein localises to the secreted. It localises to the extracellular space. The protein resides in the extracellular matrix. In terms of biological role, promotes matrix assembly. This is Glucose-fructose oxidoreductase domain-containing protein 2 (GFOD2) from Bos taurus (Bovine).